The sequence spans 157 residues: 2-C-methyl-D-erythritol 2,4-cyclodiphosphate synthase (157 aa).

Aspartate 8 and histidine 10 together coordinate a divalent metal cation. 4-CDP-2-C-methyl-D-erythritol 2-phosphate contacts are provided by residues 8 to 10 (DVH) and 34 to 35 (HS). Histidine 42 lines the a divalent metal cation pocket. Residues 56–58 (DIG), 61–65 (FPDTD), 132–135 (TTTE), phenylalanine 139, and arginine 142 each bind 4-CDP-2-C-methyl-D-erythritol 2-phosphate.

This sequence belongs to the IspF family. Homotrimer. A divalent metal cation is required as a cofactor.

The enzyme catalyses 4-CDP-2-C-methyl-D-erythritol 2-phosphate = 2-C-methyl-D-erythritol 2,4-cyclic diphosphate + CMP. Its pathway is isoprenoid biosynthesis; isopentenyl diphosphate biosynthesis via DXP pathway; isopentenyl diphosphate from 1-deoxy-D-xylulose 5-phosphate: step 4/6. Its function is as follows. Involved in the biosynthesis of isopentenyl diphosphate (IPP) and dimethylallyl diphosphate (DMAPP), two major building blocks of isoprenoid compounds. Catalyzes the conversion of 4-diphosphocytidyl-2-C-methyl-D-erythritol 2-phosphate (CDP-ME2P) to 2-C-methyl-D-erythritol 2,4-cyclodiphosphate (ME-CPP) with a corresponding release of cytidine 5-monophosphate (CMP). This Pseudomonas putida (strain W619) protein is 2-C-methyl-D-erythritol 2,4-cyclodiphosphate synthase.